We begin with the raw amino-acid sequence, 320 residues long: Ferrochelatase (320 aa).

Residues His194 and Glu275 each coordinate Fe cation.

It belongs to the ferrochelatase family. Monomer.

The protein localises to the cytoplasm. It catalyses the reaction heme b + 2 H(+) = protoporphyrin IX + Fe(2+). The protein operates within porphyrin-containing compound metabolism; protoheme biosynthesis; protoheme from protoporphyrin-IX: step 1/1. Its function is as follows. Catalyzes the ferrous insertion into protoporphyrin IX. In Shigella boydii serotype 18 (strain CDC 3083-94 / BS512), this protein is Ferrochelatase.